We begin with the raw amino-acid sequence, 209 residues long: NADH-ubiquinone oxidoreductase subunit 9 (209 aa).

It belongs to the complex I 30 kDa subunit family. Complex I is composed of about 30 different subunits.

Its subcellular location is the mitochondrion inner membrane. It carries out the reaction a ubiquinone + NADH + 5 H(+)(in) = a ubiquinol + NAD(+) + 4 H(+)(out). Core subunit of the mitochondrial membrane respiratory chain NADH dehydrogenase (Complex I) that is believed to belong to the minimal assembly required for catalysis. Complex I functions in the transfer of electrons from NADH to the respiratory chain. The immediate electron acceptor for the enzyme is believed to be ubiquinone. This is NADH-ubiquinone oxidoreductase subunit 9 (NAD9) from Paramecium tetraurelia.